The sequence spans 177 residues: Large ribosomal subunit protein uL6 (177 aa).

It belongs to the universal ribosomal protein uL6 family. Part of the 50S ribosomal subunit.

Its function is as follows. This protein binds to the 23S rRNA, and is important in its secondary structure. It is located near the subunit interface in the base of the L7/L12 stalk, and near the tRNA binding site of the peptidyltransferase center. The chain is Large ribosomal subunit protein uL6 from Acidovorax ebreus (strain TPSY) (Diaphorobacter sp. (strain TPSY)).